The chain runs to 131 residues: uncharacterized protein (131 aa).

The protein localises to the mitochondrion. This is an uncharacterized protein from Arabidopsis thaliana (Mouse-ear cress).